The chain runs to 473 residues: MAP kinase-activated protein kinase 5 (473 aa).

Residues 22–304 (INWTQKLGAG…IEGVLDHPWL (283 aa)) enclose the Protein kinase domain. ATP-binding positions include 28–36 (LGAGISGPV) and Lys-51. Ser-115 carries the post-translational modification Phosphoserine; by PKA. Asp-148 acts as the Proton acceptor in catalysis. Thr-182 bears the Phosphothreonine; by MAPK11, MAPK14, MAPK4, MAPK6 and PKA mark. Phosphoserine occurs at positions 212 and 354. Residues 409–440 (ENEDEKLNEVMQEAWKYNRECKLLRDALQSFS) adopt a coiled-coil conformation.

The protein belongs to the protein kinase superfamily. CAMK Ser/Thr protein kinase family. As to quaternary structure, interacts with SQSTM1. Interacts with ERK3/MAPK6 and ERK4/MAPK4 (via FRIEDE motif); the interaction is direct. Interacts with YWHAE; the interaction prevents phosphorylation of HSP27/HSPB1 leading to disrupt F-actin polymerization. Post-translationally, phosphorylated on Thr-182 ERK3/MAPK6 or ERK4/MAPK4; which is the regulatory phosphorylation site and is located on the T-loop/loop 12, leading to activation. Phosphorylation at Thr-182 by p38-alpha/MAPK14, p38-beta/MAPK11 is subject to debate. Phosphorylated at Ser-115 by PKA/PRKACA, leading to localization to the cytoplasm. Autophosphorylated. Expressed ubiquitously.

It localises to the cytoplasm. It is found in the nucleus. The catalysed reaction is L-seryl-[protein] + ATP = O-phospho-L-seryl-[protein] + ADP + H(+). It carries out the reaction L-threonyl-[protein] + ATP = O-phospho-L-threonyl-[protein] + ADP + H(+). With respect to regulation, activated following phosphorylation at Thr-182 by p38-alpha/MAPK14, p38-beta/MAPK11, ERK2/MAPK1, ERK3/MAPK6, and ERK4/MAPK4. Activated by stress-related extracellular stimuli; such as H(2)O(2), arsenite, anisomycin TNF alpha and also PMA and the calcium ionophore A23187; but to a lesser extent. In vitro, activated by SQSTM1. Inhibited by diterpenoid alkaloid noroxoaconitine. Its function is as follows. Tumor suppressor serine/threonine-protein kinase involved in mTORC1 signaling and post-transcriptional regulation. Phosphorylates FOXO3, ERK3/MAPK6, ERK4/MAPK4, HSP27/HSPB1, p53/TP53 and RHEB. Acts as a tumor suppressor by mediating Ras-induced senescence and phosphorylating p53/TP53. Involved in post-transcriptional regulation of MYC by mediating phosphorylation of FOXO3: phosphorylation of FOXO3 leads to promote nuclear localization of FOXO3, enabling expression of miR-34b and miR-34c, 2 post-transcriptional regulators of MYC that bind to the 3'UTR of MYC transcript and prevent MYC translation. Acts as a negative regulator of mTORC1 signaling by mediating phosphorylation and inhibition of RHEB. Part of the atypical MAPK signaling via its interaction with ERK3/MAPK6 or ERK4/MAPK4: the precise role of the complex formed with ERK3/MAPK6 or ERK4/MAPK4 is still unclear, but the complex follows a complex set of phosphorylation events: upon interaction with atypical MAPK (ERK3/MAPK6 or ERK4/MAPK4), ERK3/MAPK6 (or ERK4/MAPK4) is phosphorylated and then mediates phosphorylation and activation of MAPKAPK5, which in turn phosphorylates ERK3/MAPK6 (or ERK4/MAPK4). Mediates phosphorylation of HSP27/HSPB1 in response to PKA/PRKACA stimulation, inducing F-actin rearrangement. This chain is MAP kinase-activated protein kinase 5 (Mapkapk5), found in Mus musculus (Mouse).